The following is a 385-amino-acid chain: 1-deoxy-D-xylulose 5-phosphate reductoisomerase (385 aa).

5 residues coordinate NADPH: Thr10, Gly11, Ser12, Ile13, and Asn124. Lys125 contributes to the 1-deoxy-D-xylulose 5-phosphate binding site. Residue Glu126 coordinates NADPH. Asp150 lines the Mn(2+) pocket. The 1-deoxy-D-xylulose 5-phosphate site is built by Ser151, Glu152, Ser176, and His199. Residue Glu152 participates in Mn(2+) binding. An NADPH-binding site is contributed by Gly205. Residues Ser212, Asn217, Lys218, and Glu221 each coordinate 1-deoxy-D-xylulose 5-phosphate. Mn(2+) is bound at residue Glu221.

It belongs to the DXR family. It depends on Mg(2+) as a cofactor. Mn(2+) serves as cofactor.

It catalyses the reaction 2-C-methyl-D-erythritol 4-phosphate + NADP(+) = 1-deoxy-D-xylulose 5-phosphate + NADPH + H(+). Its pathway is isoprenoid biosynthesis; isopentenyl diphosphate biosynthesis via DXP pathway; isopentenyl diphosphate from 1-deoxy-D-xylulose 5-phosphate: step 1/6. Functionally, catalyzes the NADPH-dependent rearrangement and reduction of 1-deoxy-D-xylulose-5-phosphate (DXP) to 2-C-methyl-D-erythritol 4-phosphate (MEP). This is 1-deoxy-D-xylulose 5-phosphate reductoisomerase from Clostridium kluyveri (strain NBRC 12016).